Consider the following 138-residue polypeptide: Cell death protein Grim (138 aa).

Disordered stretches follow at residues 21–71 and 119–138; these read NGQQ…SVPL and SSGG…SKEN. Residues 23 to 51 show a composition bias toward low complexity; it reads QQTAASPRTTATAAAPSQQQQQSQQQQQQ.

As to quaternary structure, interacts with Diap2 (via BIR2 domain).

In terms of biological role, activator of apoptosis, independent of rpr and hid, that acts on the effector Dredd. This is Cell death protein Grim (grim) from Drosophila melanogaster (Fruit fly).